The sequence spans 89 residues: Small ribosomal subunit protein uS14A (89 aa).

This sequence belongs to the universal ribosomal protein uS14 family. Part of the 30S ribosomal subunit. Contacts proteins S3 and S10.

In terms of biological role, binds 16S rRNA, required for the assembly of 30S particles and may also be responsible for determining the conformation of the 16S rRNA at the A site. The protein is Small ribosomal subunit protein uS14A of Staphylococcus aureus (strain Newman).